We begin with the raw amino-acid sequence, 382 residues long: Small ribosomal subunit protein bS1 homolog (382 aa).

4 consecutive S1 motif domains span residues Gly16 to Arg84, Lys102 to Arg167, Gly188 to Lys256, and Gly273 to Arg342. Phosphoserine is present on Ser243.

The protein belongs to the bacterial ribosomal protein bS1 family.

Functionally, plays a role in sporulation. Cannot be expressed in wild-type E.coli, does not complement an E.coli rpsA deletion. This chain is Small ribosomal subunit protein bS1 homolog, found in Bacillus subtilis (strain 168).